Here is a 102-residue protein sequence, read N- to C-terminus: Large ribosomal subunit protein bL28 (102 aa).

Over residues 1-20 (MSNSCDLTGHGWQNGNMVSH) the composition is skewed to polar residues. Positions 1 to 27 (MSNSCDLTGHGWQNGNMVSHSNRKTKK) are disordered.

This sequence belongs to the bacterial ribosomal protein bL28 family.

The protein is Large ribosomal subunit protein bL28 of Neorickettsia sennetsu (strain ATCC VR-367 / Miyayama) (Ehrlichia sennetsu).